The primary structure comprises 279 residues: Thymidylate synthase 1 (279 aa).

141–142 (RR) provides a ligand contact to dUMP. Cys161 (nucleophile) is an active-site residue. DUMP is bound by residues 181 to 184 (RSND), Asn192, and 222 to 224 (HVY). Residue Asp184 coordinates (6R)-5,10-methylene-5,6,7,8-tetrahydrofolate. A (6R)-5,10-methylene-5,6,7,8-tetrahydrofolate-binding site is contributed by Ala278.

Belongs to the thymidylate synthase family. Bacterial-type ThyA subfamily. Homodimer.

The protein resides in the cytoplasm. The enzyme catalyses dUMP + (6R)-5,10-methylene-5,6,7,8-tetrahydrofolate = 7,8-dihydrofolate + dTMP. Its pathway is pyrimidine metabolism; dTTP biosynthesis. In terms of biological role, catalyzes the reductive methylation of 2'-deoxyuridine-5'-monophosphate (dUMP) to 2'-deoxythymidine-5'-monophosphate (dTMP) while utilizing 5,10-methylenetetrahydrofolate (mTHF) as the methyl donor and reductant in the reaction, yielding dihydrofolate (DHF) as a by-product. This enzymatic reaction provides an intracellular de novo source of dTMP, an essential precursor for DNA biosynthesis. This chain is Thymidylate synthase 1, found in Bacillus subtilis (strain 168).